Here is a 331-residue protein sequence, read N- to C-terminus: Ketol-acid reductoisomerase (NADP(+)) (331 aa).

The KARI N-terminal Rossmann domain occupies 2–182 (AKLFYDSDAD…GGTRAGILET (181 aa)). NADP(+) contacts are provided by residues 25–28 (YGSQ), Ser-51, Ser-53, and 83–86 (DEFQ). His-108 is an active-site residue. Position 134 (Gly-134) interacts with NADP(+). A KARI C-terminal knotted domain is found at 183–328 (NFKEETETDL…KTLRSMFSWL (146 aa)). 4 residues coordinate Mg(2+): Asp-191, Glu-195, Glu-227, and Glu-231. Position 252 (Ser-252) interacts with substrate.

Belongs to the ketol-acid reductoisomerase family. Mg(2+) is required as a cofactor.

It carries out the reaction (2R)-2,3-dihydroxy-3-methylbutanoate + NADP(+) = (2S)-2-acetolactate + NADPH + H(+). The catalysed reaction is (2R,3R)-2,3-dihydroxy-3-methylpentanoate + NADP(+) = (S)-2-ethyl-2-hydroxy-3-oxobutanoate + NADPH + H(+). Its pathway is amino-acid biosynthesis; L-isoleucine biosynthesis; L-isoleucine from 2-oxobutanoate: step 2/4. It participates in amino-acid biosynthesis; L-valine biosynthesis; L-valine from pyruvate: step 2/4. Involved in the biosynthesis of branched-chain amino acids (BCAA). Catalyzes an alkyl-migration followed by a ketol-acid reduction of (S)-2-acetolactate (S2AL) to yield (R)-2,3-dihydroxy-isovalerate. In the isomerase reaction, S2AL is rearranged via a Mg-dependent methyl migration to produce 3-hydroxy-3-methyl-2-ketobutyrate (HMKB). In the reductase reaction, this 2-ketoacid undergoes a metal-dependent reduction by NADPH to yield (R)-2,3-dihydroxy-isovalerate. The chain is Ketol-acid reductoisomerase (NADP(+)) from Prochlorococcus marinus (strain NATL1A).